The sequence spans 240 residues: MADKREPAPGWPILKGEYEVGDVKNSVLVITCGSHLPGKPILDAGAACTGSCKTENLGIEKVVAHIISNPNIRYLLVTGSEVKGHITGQSMMSLHANGVKENRIAGALGAIPYVENLNAAAVARFQEQVQVVNLLDTEDMGAITSKVRELASKDPGAFDADPLVVEISEEGEEEEEGGVVRPVSGEIAVLRSRLKAIEARMMDIGNLNKFHSGVHAGKVEGAMIGLTITISLLGLLLLGR.

Topologically, residues 1 to 218 (MADKREPAPG…KFHSGVHAGK (218 aa)) are cytoplasmic. His-85 serves as a coordination point for 5-hydroxybenzimidazolylcob(I)amide. A helical transmembrane segment spans residues 219 to 239 (VEGAMIGLTITISLLGLLLLG). Position 240 (Arg-240) is a topological domain, extracellular.

This sequence belongs to the MtrA family. In terms of assembly, the complex is composed of 8 subunits; MtrA, MtrB, MtrC, MtrD, MtrE, MtrF, MtrG and MtrH. The cofactor is 5-hydroxybenzimidazolylcob(I)amide.

It localises to the cell membrane. The catalysed reaction is 5-methyl-5,6,7,8-tetrahydromethanopterin + coenzyme M + 2 Na(+)(in) = 5,6,7,8-tetrahydromethanopterin + methyl-coenzyme M + 2 Na(+)(out). Its pathway is one-carbon metabolism; methanogenesis from CO(2); methyl-coenzyme M from 5,10-methylene-5,6,7,8-tetrahydromethanopterin: step 2/2. Functionally, part of a complex that catalyzes the formation of methyl-coenzyme M and tetrahydromethanopterin from coenzyme M and methyl-tetrahydromethanopterin. This is an energy-conserving, sodium-ion translocating step. The polypeptide is Tetrahydromethanopterin S-methyltransferase subunit A (Methanosarcina mazei (strain ATCC BAA-159 / DSM 3647 / Goe1 / Go1 / JCM 11833 / OCM 88) (Methanosarcina frisia)).